Reading from the N-terminus, the 543-residue chain is CTP synthase (543 aa).

The tract at residues 1 to 265 is amidoligase domain; it reads MTRFVFITGG…DTEVLRHFGL (265 aa). Serine 13 provides a ligand contact to CTP. Serine 13 contributes to the UTP binding site. 14–19 provides a ligand contact to ATP; it reads SLGKGI. Tyrosine 54 contacts L-glutamine. An ATP-binding site is contributed by aspartate 71. The Mg(2+) site is built by aspartate 71 and glutamate 139. CTP contacts are provided by residues 146 to 148, 186 to 191, and lysine 222; these read DIE and KTKPTQ. UTP contacts are provided by residues 186 to 191 and lysine 222; that span reads KTKPTQ. A Glutamine amidotransferase type-1 domain is found at 291 to 542; sequence RIAVVGKYTA…VGAAVKKMRL (252 aa). Glycine 354 is a binding site for L-glutamine. Catalysis depends on cysteine 381, which acts as the Nucleophile; for glutamine hydrolysis. L-glutamine-binding positions include 382 to 385, glutamate 405, and arginine 470; that span reads FGMQ. Residues histidine 515 and glutamate 517 contribute to the active site.

This sequence belongs to the CTP synthase family. Homotetramer.

The enzyme catalyses UTP + L-glutamine + ATP + H2O = CTP + L-glutamate + ADP + phosphate + 2 H(+). The catalysed reaction is L-glutamine + H2O = L-glutamate + NH4(+). It carries out the reaction UTP + NH4(+) + ATP = CTP + ADP + phosphate + 2 H(+). Its pathway is pyrimidine metabolism; CTP biosynthesis via de novo pathway; CTP from UDP: step 2/2. With respect to regulation, allosterically activated by GTP, when glutamine is the substrate; GTP has no effect on the reaction when ammonia is the substrate. The allosteric effector GTP functions by stabilizing the protein conformation that binds the tetrahedral intermediate(s) formed during glutamine hydrolysis. Inhibited by the product CTP, via allosteric rather than competitive inhibition. Catalyzes the ATP-dependent amination of UTP to CTP with either L-glutamine or ammonia as the source of nitrogen. Regulates intracellular CTP levels through interactions with the four ribonucleotide triphosphates. This chain is CTP synthase, found in Gluconacetobacter diazotrophicus (strain ATCC 49037 / DSM 5601 / CCUG 37298 / CIP 103539 / LMG 7603 / PAl5).